The following is a 959-amino-acid chain: DNA-directed RNA polymerase subunit beta'' (959 aa).

4 residues coordinate Zn(2+): cysteine 211, cysteine 288, cysteine 295, and cysteine 298.

It belongs to the RNA polymerase beta' chain family. RpoC2 subfamily. As to quaternary structure, in plastids the minimal PEP RNA polymerase catalytic core is composed of four subunits: alpha, beta, beta', and beta''. When a (nuclear-encoded) sigma factor is associated with the core the holoenzyme is formed, which can initiate transcription. It depends on Zn(2+) as a cofactor.

The protein resides in the plastid. Its subcellular location is the apicoplast. It carries out the reaction RNA(n) + a ribonucleoside 5'-triphosphate = RNA(n+1) + diphosphate. Functionally, DNA-dependent RNA polymerase catalyzes the transcription of DNA into RNA using the four ribonucleoside triphosphates as substrates. The sequence is that of DNA-directed RNA polymerase subunit beta'' from Plasmodium falciparum (isolate 3D7).